Here is a 263-residue protein sequence, read N- to C-terminus: Peptide methionine sulfoxide reductase A4, chloroplastic (263 aa).

The N-terminal 75 residues, Met1–Arg75, are a transit peptide targeting the chloroplast.

It belongs to the MsrA Met sulfoxide reductase family. Expressed in roots, stems, leaves and flowers.

The protein resides in the plastid. Its subcellular location is the chloroplast. It carries out the reaction L-methionyl-[protein] + [thioredoxin]-disulfide + H2O = L-methionyl-(S)-S-oxide-[protein] + [thioredoxin]-dithiol. The catalysed reaction is [thioredoxin]-disulfide + L-methionine + H2O = L-methionine (S)-S-oxide + [thioredoxin]-dithiol. Its function is as follows. Catalyzes the reduction of methionine sulfoxide (MetSO) to methionine in proteins. Involved in abiotic and salt stress responses. Plays a protective role against oxidative stress by restoring activity to proteins that have been inactivated by methionine oxidation. MSRA family specifically reduces the MetSO S-enantiomer. In Oryza sativa subsp. japonica (Rice), this protein is Peptide methionine sulfoxide reductase A4, chloroplastic.